A 339-amino-acid chain; its full sequence is ATPase GET3 (339 aa).

34 to 41 contributes to the ATP binding site; that stretch reads KGGVGKTT. Asp-63 is an active-site residue. ATP-binding residues include Glu-243 and Asn-270. Zn(2+) is bound by residues Cys-281 and Cys-284.

This sequence belongs to the arsA ATPase family. As to quaternary structure, homodimer.

It localises to the cytoplasm. The protein localises to the endoplasmic reticulum. Functionally, ATPase required for the post-translational delivery of tail-anchored (TA) proteins to the endoplasmic reticulum. Recognizes and selectively binds the transmembrane domain of TA proteins in the cytosol. This complex then targets to the endoplasmic reticulum by membrane-bound receptors, where the tail-anchored protein is released for insertion. This process is regulated by ATP binding and hydrolysis. ATP binding drives the homodimer towards the closed dimer state, facilitating recognition of newly synthesized TA membrane proteins. ATP hydrolysis is required for insertion. Subsequently, the homodimer reverts towards the open dimer state, lowering its affinity for the membrane-bound receptor, and returning it to the cytosol to initiate a new round of targeting. The protein is ATPase GET3 of Coccidioides immitis (strain RS) (Valley fever fungus).